We begin with the raw amino-acid sequence, 190 residues long: Ganglioside GM2 activator (190 aa).

An N-terminal signal peptide occupies residues 1–23 (MQSLMQAPVLIALGLLFAAPAQA). Disulfide bonds link C36–C180, C96–C103, C109–C135, and C122–C133. An N-linked (GlcNAc...) asparagine glycan is attached at N60.

The protein localises to the lysosome. The catalysed reaction is cholesterol(in) = cholesterol(out). Functionally, the large binding pocket can accommodate several single chain phospholipids and fatty acids, GM2A also exhibits some calcium-independent phospholipase activity. Binds gangliosides and stimulates ganglioside GM2 degradation. It stimulates only the breakdown of ganglioside GM2 and glycolipid GA2 by beta-hexosaminidase A. It extracts single GM2 molecules from membranes and presents them in soluble form to beta-hexosaminidase A for cleavage of N-acetyl-D-galactosamine and conversion to GM3. Has cholesterol transfer activity. This chain is Ganglioside GM2 activator (GM2A), found in Macaca fascicularis (Crab-eating macaque).